The primary structure comprises 444 residues: E3 ubiquitin-protein ligase APD2 (444 aa).

Residues 1–15 show a composition bias toward low complexity; sequence MSLPDSLPSSSSSPP. The interval 1–41 is disordered; that stretch reads MSLPDSLPSSSSSPPVTREETGFHRFEHHGNDSGFDHRDRP. The segment covering 17–41 has biased composition (basic and acidic residues); sequence TREETGFHRFEHHGNDSGFDHRDRP. Helical transmembrane passes span 74–94 and 312–332; these read VVVV…GLYG and IAYI…SSLF. The segment at 393–432 adopts an RING-type zinc-finger fold; it reads CAICYDAPRDCFFLSCGHCVACFQCGTRIAETSGFCPVCR.

In terms of assembly, interacts with At1g78040, At1g10650, VHA-c4/AVAP4, VHA-c''2/VMA16 and TUFA. Expressed in the shoot apical meristems (SAM), root tips, pollen and inflorescences.

The protein resides in the endomembrane system. The enzyme catalyses S-ubiquitinyl-[E2 ubiquitin-conjugating enzyme]-L-cysteine + [acceptor protein]-L-lysine = [E2 ubiquitin-conjugating enzyme]-L-cysteine + N(6)-ubiquitinyl-[acceptor protein]-L-lysine.. It functions in the pathway protein modification; protein ubiquitination. In terms of biological role, exhibits E2-dependent E3 ligase activity. Involved in pollen mitosis II (PMII) regulation during male gametogenesis. This is E3 ubiquitin-protein ligase APD2 from Arabidopsis thaliana (Mouse-ear cress).